Reading from the N-terminus, the 102-residue chain is Trp operon repressor homolog (102 aa).

The DNA-binding element occupies 59–82 (QRQISQMLGVGIATITRGSNELKL).

The protein belongs to the TrpR family. Homodimer.

It localises to the cytoplasm. This protein is an aporepressor. When complexed with L-tryptophan it binds the operator region of the trp operon and prevents the initiation of transcription. This is Trp operon repressor homolog from Vibrio vulnificus (strain CMCP6).